Reading from the N-terminus, the 262-residue chain is Hydroxyethylthiazole kinase (262 aa).

Methionine 50 contributes to the substrate binding site. ATP is bound by residues arginine 125 and threonine 171. Glycine 198 lines the substrate pocket.

It belongs to the Thz kinase family. Mg(2+) serves as cofactor.

It carries out the reaction 5-(2-hydroxyethyl)-4-methylthiazole + ATP = 4-methyl-5-(2-phosphooxyethyl)-thiazole + ADP + H(+). The protein operates within cofactor biosynthesis; thiamine diphosphate biosynthesis; 4-methyl-5-(2-phosphoethyl)-thiazole from 5-(2-hydroxyethyl)-4-methylthiazole: step 1/1. Functionally, catalyzes the phosphorylation of the hydroxyl group of 4-methyl-5-beta-hydroxyethylthiazole (THZ). This Shigella boydii serotype 4 (strain Sb227) protein is Hydroxyethylthiazole kinase.